A 234-amino-acid polypeptide reads, in one-letter code: ATP synthase subunit a 1 (234 aa).

The next 6 helical transmembrane spans lie at 29 to 49 (FLVH…VALL), 90 to 110 (LIAT…IPGF), 116 to 136 (NLNT…VVGV), 147 to 167 (FVGP…IGHL), 186 to 206 (IVLV…MMLM), and 207 to 227 (GILV…IYIA).

This sequence belongs to the ATPase A chain family. In terms of assembly, F-type ATPases have 2 components, CF(1) - the catalytic core - and CF(0) - the membrane proton channel. CF(1) has five subunits: alpha(3), beta(3), gamma(1), delta(1), epsilon(1). CF(0) has three main subunits: a(1), b(2) and c(9-12). The alpha and beta chains form an alternating ring which encloses part of the gamma chain. CF(1) is attached to CF(0) by a central stalk formed by the gamma and epsilon chains, while a peripheral stalk is formed by the delta and b chains.

It localises to the cell inner membrane. In terms of biological role, key component of the proton channel; it plays a direct role in the translocation of protons across the membrane. This Syntrophotalea carbinolica (strain DSM 2380 / NBRC 103641 / GraBd1) (Pelobacter carbinolicus) protein is ATP synthase subunit a 1.